We begin with the raw amino-acid sequence, 426 residues long: Transcription factor bHLH60 (426 aa).

2 stretches are compositionally biased toward polar residues: residues 117–137 (QNGN…SSAN) and 148–172 (TDSS…QNNR). The tract at residues 117–201 (QNGNISGETP…SSEENEKLPY (85 aa)) is disordered. Residues 191 to 200 (KSSEENEKLP) show a composition bias toward basic and acidic residues. Residues 210 to 307 (QATDSHSLAE…DEIINHVQSL (98 aa)) form the bHLH domain. Positions 367 to 398 (HRQLQQPPTQQWPFDGLNQPVWGREEDQAHGN) are disordered.

In terms of assembly, homodimer. As to expression, expressed constitutively in roots, leaves, stems, and flowers.

The protein resides in the nucleus. In Arabidopsis thaliana (Mouse-ear cress), this protein is Transcription factor bHLH60 (BHLH60).